Here is a 446-residue protein sequence, read N- to C-terminus: Exodeoxyribonuclease 7 large subunit (446 aa).

It belongs to the XseA family. Heterooligomer composed of large and small subunits.

The protein localises to the cytoplasm. It catalyses the reaction Exonucleolytic cleavage in either 5'- to 3'- or 3'- to 5'-direction to yield nucleoside 5'-phosphates.. In terms of biological role, bidirectionally degrades single-stranded DNA into large acid-insoluble oligonucleotides, which are then degraded further into small acid-soluble oligonucleotides. In Streptococcus pneumoniae (strain ATCC 700669 / Spain 23F-1), this protein is Exodeoxyribonuclease 7 large subunit.